Consider the following 507-residue polypeptide: ATP synthase subunit alpha, chloroplastic (507 aa).

170 to 177 serves as a coordination point for ATP; it reads GDRQTGKT. A Phosphothreonine modification is found at Thr257.

It belongs to the ATPase alpha/beta chains family. As to quaternary structure, F-type ATPases have 2 components, CF(1) - the catalytic core - and CF(0) - the membrane proton channel. CF(1) has five subunits: alpha(3), beta(3), gamma(1), delta(1), epsilon(1). CF(0) has four main subunits: a, b, b' and c.

The protein localises to the plastid. The protein resides in the chloroplast thylakoid membrane. The catalysed reaction is ATP + H2O + 4 H(+)(in) = ADP + phosphate + 5 H(+)(out). In terms of biological role, produces ATP from ADP in the presence of a proton gradient across the membrane. The alpha chain is a regulatory subunit. The polypeptide is ATP synthase subunit alpha, chloroplastic (Lepidium virginicum (Virginia pepperweed)).